The sequence spans 555 residues: Protein NRT1/ PTR FAMILY 5.12 (555 aa).

A run of 2 helical transmembrane segments spans residues 53 to 73 and 83 to 103; these read FAYF…LGES and LWLG…DSFL. Phosphothreonine is present on T108. 10 consecutive transmembrane segments (helical) span residues 109 to 129, 148 to 168, 190 to 210, 221 to 241, 315 to 335, 357 to 377, 401 to 421, 443 to 463, 482 to 502, and 526 to 546; these read ILLT…SATI, VIIF…FKVC, SYFN…RLVT, LGYA…LLGI, AVLS…VFAQ, VPAA…IPIY, ISTG…VEMK, VCWL…TMVG, ALYL…VSVI, and YFYW…VYFA.

It belongs to the major facilitator superfamily. Proton-dependent oligopeptide transporter (POT/PTR) (TC 2.A.17) family. In terms of tissue distribution, expressed in shoots and roots.

The protein resides in the membrane. The polypeptide is Protein NRT1/ PTR FAMILY 5.12 (NPF5.12) (Arabidopsis thaliana (Mouse-ear cress)).